The chain runs to 125 residues: uncharacterized protein (125 aa).

This is an uncharacterized protein from Mycobacterium bovis (strain ATCC BAA-935 / AF2122/97).